We begin with the raw amino-acid sequence, 267 residues long: WUSCHEL-related homeobox 8 (267 aa).

A DNA-binding region (homeobox; WUS-type) is located at residues 88–152 (TARQRWTPTP…NRRARSKRKQ (65 aa)). The disordered stretch occupies residues 148–195 (SKRKQAALPNNNAESEAEADEESPTDKKPKSDRPLHQNIAMRDHNSER). Residues 171–195 (PTDKKPKSDRPLHQNIAMRDHNSER) show a composition bias toward basic and acidic residues.

Belongs to the WUS homeobox family.

The protein localises to the nucleus. Transcription factor which may be involved in developmental processes. This chain is WUSCHEL-related homeobox 8 (WOX8), found in Oryza sativa subsp. japonica (Rice).